The following is a 370-amino-acid chain: Peptidyl-prolyl cis-trans isomerase D (370 aa).

Ser5 carries the phosphoserine modification. The region spanning 19–183 (FFDVDIGGER…KLCVIAECGE (165 aa)) is the PPIase cyclophilin-type domain. Residue Lys171 is modified to N6-acetyllysine. A chaperone activity region spans residues 185–215 (KEGDDWGIFPKDGSGDSHPDFPEDADIDLKD). A Phosphoserine modification is found at Ser198. Residues 214–370 (KDVDKILLIS…EKAVYAKMFA (157 aa)) are interaction with HSP90AB1. 3 TPR repeats span residues 223-256 (SEDL…VDSS), 273-306 (LSCV…DPSN), and 307-340 (TKAL…APGD).

The protein belongs to the cyclophilin-type PPIase family. PPIase D subfamily. Identified in ESR1 or NR3C1/GCR steroid receptor-chaperone complexes. Found in HSP90 chaperone complexes with kinase clients LCK or EIF2AK1. Two monomers associate with one HSP90 homodimer. Interacts with HSP90AA1. Interacts with HSP90AB1; PPID and FKBP4 compete for binding to HSP90AB1 and the interaction is mutually exclusive with the PPID:HSPA8 interaction. Interacts with HSPA8; PPID and STIP1 but not FKBP4 compete for binding to HSPA8 and the interaction is mutually exclusive with the PPID:HSP90AB1 interaction. Interacts with S100A1 and S100A2; the interactions dissociate the PPID:HSP90AA1 interaction. Interacts with S100A6. Interacts with MYB, ILF2, XRCC6, RACK1 and RPS3. Interacts with cytoplasmic dynein 1 intermediate chain (DYNC1I1 or DYNC1I2).

The protein localises to the cytoplasm. Its subcellular location is the nucleus. It localises to the nucleolus. It is found in the nucleoplasm. It catalyses the reaction [protein]-peptidylproline (omega=180) = [protein]-peptidylproline (omega=0). Its activity is regulated as follows. Less sensitive to inhibition by cyclosporin A than is CYP-18. PPIase that catalyzes the cis-trans isomerization of proline imidic peptide bonds in oligopeptides and may therefore assist protein folding. Proposed to act as a co-chaperone in HSP90 complexes such as in unligated steroid receptors heterocomplexes. Different co-chaperones seem to compete for association with HSP90 thus establishing distinct HSP90-co-chaperone-receptor complexes with the potential to exert tissue-specific receptor activity control. May have a preference for estrogen receptor complexes and is not found in glucocorticoid receptor complexes. May be involved in cytoplasmic dynein-dependent movement of the receptor from the cytoplasm to the nucleus. May regulate MYB by inhibiting its DNA-binding activity. Involved in regulation of AHR signaling by promoting the formation of the AHR:ARNT dimer; the function is independent of HSP90 but requires the chaperone activity region. Involved in regulation of UV radiation-induced apoptosis. The protein is Peptidyl-prolyl cis-trans isomerase D of Mus musculus (Mouse).